Consider the following 400-residue polypeptide: MIIKPKIRGFICTTTHPVGCEANVQEQITLTKAKGKIANGPKRVLVVGSSSGYGLSSRIAAAFGSDAATIGVFFEKPGTETKPGTAGWYNSAAFDKFAKAEGLYSKSINCDAFSHEAKQKVIELIKQDLGEIDMVVYSLASPVRKLPDSGELIRSALKPIGETYTATAVDTNKDCIIEATVEPATEQEIADTVTVMGGEDWELWIKALSEAGVLADNCKTVAYSYIGTELTWPIYWHGALGKAKMDLDRAAKALNEQLSATGGSANVAVLKSVVTQASSAIPVMPLYIAMVFKKMRQEGLHEGCMEQIYRMFSERLFRADGAKPETDSDNRIRLDDWELREDIQQHCRNLWPQVTTENLSELTDYREYKAEFIKLFGFGIEGIDYDADVNPYVEFDVIEL.

NAD(+) contacts are provided by residues 48–53, 74–75, 111–112, and 139–140; these read GSSSGY, FE, DA, and LA. Tyr-225 contacts substrate. Tyr-235 acts as the Proton donor in catalysis. NAD(+) is bound by residues Lys-244 and 273–275; that span reads VVT.

It belongs to the TER reductase family. As to quaternary structure, monomer.

It carries out the reaction a 2,3-saturated acyl-[ACP] + NAD(+) = a (2E)-enoyl-[ACP] + NADH + H(+). The protein operates within lipid metabolism; fatty acid biosynthesis. Its function is as follows. Involved in the final reduction of the elongation cycle of fatty acid synthesis (FAS II). Catalyzes the reduction of a carbon-carbon double bond in an enoyl moiety that is covalently linked to an acyl carrier protein (ACP). The protein is Enoyl-[acyl-carrier-protein] reductase [NADH] of Shewanella baltica (strain OS185).